We begin with the raw amino-acid sequence, 188 residues long: dCTP deaminase (188 aa).

DCTP is bound at residue 109 to 114 (KSTYAR). Residue Glu-135 is the Proton donor/acceptor of the active site. The dCTP site is built by Gln-154, Tyr-168, and Gln-178.

The protein belongs to the dCTP deaminase family. Homotrimer.

The enzyme catalyses dCTP + H2O + H(+) = dUTP + NH4(+). It functions in the pathway pyrimidine metabolism; dUMP biosynthesis; dUMP from dCTP (dUTP route): step 1/2. Its function is as follows. Catalyzes the deamination of dCTP to dUTP. The polypeptide is dCTP deaminase (Helicobacter hepaticus (strain ATCC 51449 / 3B1)).